Reading from the N-terminus, the 257-residue chain is 4-hydroxy-tetrahydrodipicolinate reductase (257 aa).

NAD(+) contacts are provided by residues G8–V13, A90–T92, and A114–M117. H146 (proton donor/acceptor) is an active-site residue. A (S)-2,3,4,5-tetrahydrodipicolinate-binding site is contributed by H147. K150 functions as the Proton donor in the catalytic mechanism. Residue G156 to T157 participates in (S)-2,3,4,5-tetrahydrodipicolinate binding.

Belongs to the DapB family.

The protein resides in the cytoplasm. The enzyme catalyses (S)-2,3,4,5-tetrahydrodipicolinate + NAD(+) + H2O = (2S,4S)-4-hydroxy-2,3,4,5-tetrahydrodipicolinate + NADH + H(+). The catalysed reaction is (S)-2,3,4,5-tetrahydrodipicolinate + NADP(+) + H2O = (2S,4S)-4-hydroxy-2,3,4,5-tetrahydrodipicolinate + NADPH + H(+). It functions in the pathway amino-acid biosynthesis; L-lysine biosynthesis via DAP pathway; (S)-tetrahydrodipicolinate from L-aspartate: step 4/4. Its function is as follows. Catalyzes the conversion of 4-hydroxy-tetrahydrodipicolinate (HTPA) to tetrahydrodipicolinate. The polypeptide is 4-hydroxy-tetrahydrodipicolinate reductase (Aliarcobacter butzleri (strain RM4018) (Arcobacter butzleri)).